The sequence spans 662 residues: Polyunsaturated fatty acid (12S)/(13S)-lipoxygenase, epidermal-type (662 aa).

Positions 2–114 (GKYKILVVTG…TIYLPEGTAL (113 aa)) constitute a PLAT domain. A Lipoxygenase domain is found at 114–662 (LKVNDDTKNL…PSMVENSVTI (549 aa)). Residues His360, His365, His540, His544, and Ile662 each contribute to the Fe cation site.

The protein belongs to the lipoxygenase family. Fe cation serves as cofactor.

The protein localises to the cytoplasm. The enzyme catalyses (5Z,8Z,11Z,14Z)-eicosatetraenoate + O2 = (12S)-hydroperoxy-(5Z,8Z,10E,14Z)-eicosatetraenoate. It carries out the reaction 1-O-methyl-(9Z,12Z)-octadecadienoate + O2 = 1-O-methyl-(13S)-hydroperoxy-(9Z,11E)-octadecadienoate. It catalyses the reaction (8Z,11Z,14Z)-eicosatrienoate + O2 = (12S)-hydroperoxy-(8Z,10E,14Z)-eicosatrienoate. The catalysed reaction is (5Z,8Z,11Z)-eicosatrienoate + O2 = (12S)-hydroperoxy-(5Z,8Z,10E)-eicosatrienoate. The enzyme catalyses 1-O-methyl-(5Z,8Z,11Z,14Z)-eicosatetraenoate + O2 = 1-O-methyl-(12S)-hydroperoxy-(5Z,8Z,10E,14Z)-eicosatetraenoate. It carries out the reaction (9Z,12Z)-octadecadienoate + O2 = (13S)-hydroperoxy-(9Z,11E)-octadecadienoate. It catalyses the reaction (4Z,7Z,10Z,13Z,16Z,19Z)-docosahexaenoate + O2 = (14S)-hydroperoxy-(4Z,7Z,10Z,12E,16Z,19Z)-docosahexaenoate. It participates in lipid metabolism; hydroperoxy eicosatetraenoic acid biosynthesis. With respect to regulation, arachidonate 12-lipoxygenase activity is decreased when the pH decreases from 7.4 to 6.0. Functionally, catalyzes the regio and stereo-specific incorporation of a single molecule of dioxygen into free and esterified polyunsaturated fatty acids generating lipid hydroperoxides that can be further reduced to the corresponding hydroxy species. Shows increasing catalytic activity within the series arachidonic acid &lt; 5,8,11-eicosatrienoic acid &lt; linoleic acid &lt; 8,11,14-eicosatrienoic acid. In Rattus norvegicus (Rat), this protein is Polyunsaturated fatty acid (12S)/(13S)-lipoxygenase, epidermal-type.